The chain runs to 1383 residues: PAS domain-containing serine/threonine-protein kinase (1383 aa).

M1 is modified (N-acetylmethionine). Phosphoserine is present on S19. T31 carries the post-translational modification Phosphothreonine. PAS domains lie at S117–D188 and Y333–L400. The residue at position 1000 (S1000) is a Phosphoserine. A Protein kinase domain is found at Y1059 to V1311. Residues L1065–V1073, K1088, and E1142–D1149 contribute to the ATP site. D1188 serves as the catalytic Proton acceptor. D1206 contacts ATP. T1221 and T1225 each carry phosphothreonine; by autocatalysis. Residues G1344–S1383 are disordered. Basic and acidic residues predominate over residues R1364–D1377.

The protein belongs to the protein kinase superfamily. CAMK Ser/Thr protein kinase family. Autophosphorylated on Thr-1221 and Thr-1225. Autophosphorylation is activated by phospholipids. In terms of tissue distribution, ubiquitously expressed. Strongly up-regulated in postmeiotic germ cells during spermatogenesis.

It localises to the cytoplasm. Its subcellular location is the nucleus. The enzyme catalyses L-seryl-[protein] + ATP = O-phospho-L-seryl-[protein] + ADP + H(+). It catalyses the reaction L-threonyl-[protein] + ATP = O-phospho-L-threonyl-[protein] + ADP + H(+). Its activity is regulated as follows. Protein kinase activity is inhibited by the first PAS domain: binding of an unidentified ligand desinhibits the protein kinase activity. May be activated by autophosphorylation on Thr-1221 and Thr-1225. Autophosphorylation is enhanced upon phosphatidylinositol monophosphate (phosphatidylinositol 4-phosphate) binding and inhibited upon phosphatidylinositol bi- and tri-phosphate binding. In contrast, phosphorylation of target proteins is inhibited upon all phosphatidylinositol-binding (phosphatidylinositol mono- bi- and tri-phosphate). Functionally, serine/threonine-protein kinase involved in energy homeostasis and protein translation. Phosphorylates EEF1A1, GYS1, PDX1 and RPS6. Probably plays a role under changing environmental conditions (oxygen, glucose, nutrition), rather than under standard conditions. Acts as a sensor involved in energy homeostasis: regulates glycogen synthase synthesis by mediating phosphorylation of GYS1, leading to GYS1 inactivation. May be involved in glucose-stimulated insulin production in pancreas and regulation of glucagon secretion by glucose in alpha cells; however such data require additional evidences. May play a role in regulation of protein translation by phosphorylating EEF1A1, leading to increase translation efficiency. May also participate in respiratory regulation. In Mus musculus (Mouse), this protein is PAS domain-containing serine/threonine-protein kinase (Pask).